Consider the following 426-residue polypeptide: Glutamate-1-semialdehyde 2,1-aminomutase (426 aa).

Lys-265 carries the post-translational modification N6-(pyridoxal phosphate)lysine.

This sequence belongs to the class-III pyridoxal-phosphate-dependent aminotransferase family. HemL subfamily. In terms of assembly, homodimer. Requires pyridoxal 5'-phosphate as cofactor.

It localises to the cytoplasm. The catalysed reaction is (S)-4-amino-5-oxopentanoate = 5-aminolevulinate. It participates in porphyrin-containing compound metabolism; protoporphyrin-IX biosynthesis; 5-aminolevulinate from L-glutamyl-tRNA(Glu): step 2/2. This is Glutamate-1-semialdehyde 2,1-aminomutase from Cronobacter sakazakii (strain ATCC BAA-894) (Enterobacter sakazakii).